A 238-amino-acid chain; its full sequence is Pyridoxine 5'-phosphate synthase (238 aa).

Asn7 provides a ligand contact to 3-amino-2-oxopropyl phosphate. 9-10 (DH) contacts 1-deoxy-D-xylulose 5-phosphate. 3-amino-2-oxopropyl phosphate is bound at residue Arg18. Residue His43 is the Proton acceptor of the active site. 1-deoxy-D-xylulose 5-phosphate is bound by residues Arg45 and His50. The Proton acceptor role is filled by Glu70. Residue Thr100 participates in 1-deoxy-D-xylulose 5-phosphate binding. His191 serves as the catalytic Proton donor. 3-amino-2-oxopropyl phosphate is bound by residues Gly192 and 213-214 (GH).

It belongs to the PNP synthase family. Homooctamer; tetramer of dimers.

The protein localises to the cytoplasm. The catalysed reaction is 3-amino-2-oxopropyl phosphate + 1-deoxy-D-xylulose 5-phosphate = pyridoxine 5'-phosphate + phosphate + 2 H2O + H(+). It functions in the pathway cofactor biosynthesis; pyridoxine 5'-phosphate biosynthesis; pyridoxine 5'-phosphate from D-erythrose 4-phosphate: step 5/5. Functionally, catalyzes the complicated ring closure reaction between the two acyclic compounds 1-deoxy-D-xylulose-5-phosphate (DXP) and 3-amino-2-oxopropyl phosphate (1-amino-acetone-3-phosphate or AAP) to form pyridoxine 5'-phosphate (PNP) and inorganic phosphate. In Syntrophobacter fumaroxidans (strain DSM 10017 / MPOB), this protein is Pyridoxine 5'-phosphate synthase.